We begin with the raw amino-acid sequence, 361 residues long: Spermidine/putrescine import ATP-binding protein PotA (361 aa).

One can recognise an ABC transporter domain in the interval 4-234 (LEIKNVVKRF…PKNRFVADFL (231 aa)). 36 to 43 (GPSGCGKT) contacts ATP.

The protein belongs to the ABC transporter superfamily. Spermidine/putrescine importer (TC 3.A.1.11.1) family. As to quaternary structure, the complex is composed of two ATP-binding proteins (PotA), two transmembrane proteins (PotB and PotC) and a solute-binding protein (PotD).

Its subcellular location is the cell inner membrane. The enzyme catalyses ATP + H2O + polyamine-[polyamine-binding protein]Side 1 = ADP + phosphate + polyamineSide 2 + [polyamine-binding protein]Side 1.. In terms of biological role, part of the ABC transporter complex PotABCD involved in spermidine/putrescine import. Responsible for energy coupling to the transport system. This is Spermidine/putrescine import ATP-binding protein PotA from Chromobacterium violaceum (strain ATCC 12472 / DSM 30191 / JCM 1249 / CCUG 213 / NBRC 12614 / NCIMB 9131 / NCTC 9757 / MK).